Reading from the N-terminus, the 634-residue chain is 1-deoxy-D-xylulose-5-phosphate synthase (634 aa).

Thiamine diphosphate is bound by residues His-74 and 115–117 (AHS). Asp-146 contributes to the Mg(2+) binding site. Residues 147 to 148 (GA), Asn-176, Tyr-283, and Glu-365 each bind thiamine diphosphate. Asn-176 contacts Mg(2+).

This sequence belongs to the transketolase family. DXPS subfamily. Homodimer. It depends on Mg(2+) as a cofactor. Thiamine diphosphate is required as a cofactor.

The enzyme catalyses D-glyceraldehyde 3-phosphate + pyruvate + H(+) = 1-deoxy-D-xylulose 5-phosphate + CO2. It functions in the pathway metabolic intermediate biosynthesis; 1-deoxy-D-xylulose 5-phosphate biosynthesis; 1-deoxy-D-xylulose 5-phosphate from D-glyceraldehyde 3-phosphate and pyruvate: step 1/1. In terms of biological role, catalyzes the acyloin condensation reaction between C atoms 2 and 3 of pyruvate and glyceraldehyde 3-phosphate to yield 1-deoxy-D-xylulose-5-phosphate (DXP). The protein is 1-deoxy-D-xylulose-5-phosphate synthase of Burkholderia mallei (strain ATCC 23344).